We begin with the raw amino-acid sequence, 346 residues long: Very-long-chain 3-oxoacyl-CoA reductase (346 aa).

The chain crosses the membrane as a helical span at residues 19-39 (LIYGVLFVGVYKITTFTLSVG). The NADP(+) site is built by V65, D119, N146, Y220, K224, V253, and S255. Y220 (proton donor) is an active-site residue. The active-site Lowers pKa of active site Tyr is K224.

It belongs to the short-chain dehydrogenases/reductases (SDR) family.

It is found in the endoplasmic reticulum membrane. The catalysed reaction is a very-long-chain (3R)-3-hydroxyacyl-CoA + NADP(+) = a very-long-chain 3-oxoacyl-CoA + NADPH + H(+). Its pathway is lipid metabolism; fatty acid biosynthesis. Functionally, component of the microsomal membrane bound fatty acid elongation system, which produces the 26-carbon very long-chain fatty acids (VLCFA) from palmitate. Catalyzes the reduction of the 3-ketoacyl-CoA intermediate that is formed in each cycle of fatty acid elongation. VLCFAs serve as precursors for ceramide and sphingolipids. The protein is Very-long-chain 3-oxoacyl-CoA reductase of Debaryomyces hansenii (strain ATCC 36239 / CBS 767 / BCRC 21394 / JCM 1990 / NBRC 0083 / IGC 2968) (Yeast).